Consider the following 215-residue polypeptide: Cytochrome b6 (215 aa).

Residues 32-52 traverse the membrane as a helical segment; sequence IFYCLGGITLTCFLVQVATGF. Cysteine 35 is a binding site for heme c. Heme b-binding residues include histidine 86 and histidine 100. 3 consecutive transmembrane segments (helical) span residues 90 to 110, 116 to 136, and 186 to 206; these read ASMM…TGGF, LTWV…VTGY, and LHTF…FLMI. Heme b-binding residues include histidine 187 and histidine 202.

It belongs to the cytochrome b family. PetB subfamily. In terms of assembly, the 4 large subunits of the cytochrome b6-f complex are cytochrome b6, subunit IV (17 kDa polypeptide, PetD), cytochrome f and the Rieske protein, while the 4 small subunits are PetG, PetL, PetM and PetN. The complex functions as a dimer. Heme b is required as a cofactor. It depends on heme c as a cofactor.

The protein resides in the plastid. The protein localises to the chloroplast thylakoid membrane. Component of the cytochrome b6-f complex, which mediates electron transfer between photosystem II (PSII) and photosystem I (PSI), cyclic electron flow around PSI, and state transitions. This is Cytochrome b6 from Pinus koraiensis (Korean pine).